A 368-amino-acid polypeptide reads, in one-letter code: Quinolinate synthase (368 aa).

Positions 46 and 63 each coordinate iminosuccinate. Cysteine 110 serves as a coordination point for [4Fe-4S] cluster. Iminosuccinate contacts are provided by residues 141–143 (YVN) and serine 162. Cysteine 230 contacts [4Fe-4S] cluster. Residues 256-258 (HPE) and threonine 273 each bind iminosuccinate. Cysteine 320 is a binding site for [4Fe-4S] cluster.

Belongs to the quinolinate synthase family. Type 3 subfamily. Requires [4Fe-4S] cluster as cofactor.

The protein resides in the cytoplasm. The catalysed reaction is iminosuccinate + dihydroxyacetone phosphate = quinolinate + phosphate + 2 H2O + H(+). The protein operates within cofactor biosynthesis; NAD(+) biosynthesis; quinolinate from iminoaspartate: step 1/1. Functionally, catalyzes the condensation of iminoaspartate with dihydroxyacetone phosphate to form quinolinate. The protein is Quinolinate synthase of Bacillus thuringiensis (strain Al Hakam).